The primary structure comprises 361 residues: 3-dehydroquinate synthase (361 aa).

The protein belongs to the archaeal-type DHQ synthase family.

The catalysed reaction is 2-amino-2,3,7-trideoxy-D-lyxo-hept-6-ulosonate + NAD(+) + H2O = 3-dehydroquinate + NH4(+) + NADH + H(+). Its function is as follows. Catalyzes the oxidative deamination and cyclization of 2-amino-3,7-dideoxy-D-threo-hept-6-ulosonic acid (ADH) to yield 3-dehydroquinate (DHQ), which is fed into the canonical shikimic pathway of aromatic amino acid biosynthesis. The chain is 3-dehydroquinate synthase from Methanococcus maripaludis (strain C5 / ATCC BAA-1333).